The following is a 212-amino-acid chain: 3-isopropylmalate dehydratase small subunit (212 aa).

It belongs to the LeuD family. LeuD type 1 subfamily. In terms of assembly, heterodimer of LeuC and LeuD.

It carries out the reaction (2R,3S)-3-isopropylmalate = (2S)-2-isopropylmalate. The protein operates within amino-acid biosynthesis; L-leucine biosynthesis; L-leucine from 3-methyl-2-oxobutanoate: step 2/4. In terms of biological role, catalyzes the isomerization between 2-isopropylmalate and 3-isopropylmalate, via the formation of 2-isopropylmaleate. This is 3-isopropylmalate dehydratase small subunit from Pseudomonas aeruginosa (strain UCBPP-PA14).